Here is a 155-residue protein sequence, read N- to C-terminus: RING finger protein 122 (155 aa).

The helical transmembrane segment at 40–60 (VIFGTGIFVFMLSLIFCCYFI) threads the bilayer. An RING-type; atypical zinc finger spans residues 93–134 (CAVCLEDFKGKDELGVLPCQHAFHRKCLVKWLEVRCVCPMCN).

Its subcellular location is the golgi apparatus. The protein localises to the endoplasmic reticulum. It is found in the membrane. In terms of biological role, may induce necrosis and apoptosis. May play a role in cell viability. The chain is RING finger protein 122 (Rnf122) from Mus musculus (Mouse).